A 176-amino-acid polypeptide reads, in one-letter code: Salivary antigen 1 (176 aa).

The signal sequence occupies residues 1 to 18; that stretch reads MNYCFLVFLVYLVFAVNG.

Its subcellular location is the secreted. The sequence is that of Salivary antigen 1 from Ctenocephalides felis (Cat flea).